Here is a 1470-residue protein sequence, read N- to C-terminus: Collagen alpha-1(XVII) chain (1470 aa).

Disordered regions lie at residues 1–155 (MDVT…PSTR), 167–193 (KGSR…GTVE), and 422–452 (SAEN…GGAS). At 1 to 476 (MDVTKKSKRD…CGSCCSWWKW (476 aa)) the chain is on the cytoplasmic side. The nonhelical region (NC16) stretch occupies residues 1-573 (MDVTKKSKRD…MTEQENGNLR (573 aa)). Basic and acidic residues predominate over residues 9–19 (RDGTEVTERIV). Residues 60-74 (GSSGYINSSGSIRGN) are compositionally biased toward low complexity. Polar residues-rich tracts occupy residues 75 to 96 (ASTS…SPGS), 111 to 120 (EGSSSGNSSP), and 170 to 184 (RSAS…SNTL). The segment at 146–231 (RLQSASPSTR…WSSTLPAGSS (86 aa)) is necessary for interaction with DST and for the recruitment of DST to hemidesmosome. Gly residues predominate over residues 430-452 (RGGGGGRGKGGGAGGGGGGGGAS). Residues 477-497 (LLGLLLTWLLLLGLLFGLIAL) form a helical; Signal-anchor for type II membrane protein membrane-spanning segment. Over 498-1470 (AEEVRKLKAR…RRKRSIAIKP (973 aa)) the chain is Extracellular. A Phosphoserine; by CK2 modification is found at Ser-551. Disordered stretches follow at residues 568–873 (ENGN…FLSS), 885–999 (GVDL…SSSG), 1159–1181 (DYRN…NAWS), 1194–1220 (TAGL…GVSA), and 1249–1298 (FIVG…TNGG). The triple-helical region stretch occupies residues 574–1456 (GSPGPKGDMG…KGEKGDKGDQ (883 aa)). Pro residues predominate over residues 597–609 (PGIPGPLGHPGPE). Composition is skewed to low complexity over residues 742–755 (EPGA…AGAD) and 781–803 (DPGK…PGRP). A compositionally biased stretch (pro residues) spans 827–848 (PGPPGPPGAMGPPGPPGTPGPA). Residues 850–873 (PAGLPGQQGPRGEPGLAGDSFLSS) are compositionally biased toward low complexity. Composition is skewed to pro residues over residues 891–914 (PPGP…PRGP), 940–949 (PPGPPGPPGP), 982–992 (PPGPPGPPGPP), 1166–1175 (PPGPPGPPGM), 1201–1215 (PGPP…PRGP), and 1253–1262 (PPGPPGPQGP). An N-linked (GlcNAc...) asparagine glycan is attached at Asn-1273. A compositionally biased stretch (low complexity) spans 1275 to 1290 (SSNSSARRGTSYSSST). The N-linked (GlcNAc...) asparagine glycan is linked to Asn-1395. The tract at residues 1406-1470 (TYGTIPGPPG…RRKRSIAIKP (65 aa)) is disordered. Residues 1434–1443 (PRGPPGPPGP) are compositionally biased toward pro residues. Residues 1446 to 1455 (NKGEKGDKGD) are compositionally biased toward basic and acidic residues. A nonhelical region (NC1) region spans residues 1457-1470 (VYTGRRKRSIAIKP). Over residues 1460 to 1470 (GRRKRSIAIKP) the composition is skewed to basic residues.

In terms of assembly, homotrimers of alpha 1(XVII)chains. Interacts (via cytoplasmic region) with ITGB4 (via cytoplasmic region). Interacts (via cytoplasmic region) with DST (via N-terminus). Interacts (via N-terminus) with PLEC. Interacts (via cytoplasmic region) with DSP. The intracellular/endo domain is disulfide-linked. In terms of processing, prolines at the third position of the tripeptide repeating unit (G-X-Y) are hydroxylated in some or all of the chains. Post-translationally, the ectodomain is shedded from the surface of keratinocytes resulting in a 120-kDa soluble form, also named as 120 kDa linear IgA disease antigen homolog. The shedding is mediated by membrane-bound metalloproteases. This cleavage is inhibited by phosphorylation at Ser-551.

Its subcellular location is the cell junction. The protein localises to the hemidesmosome. It localises to the membrane. It is found in the secreted. The protein resides in the extracellular space. Its subcellular location is the extracellular matrix. The protein localises to the basement membrane. May play a role in the integrity of hemidesmosome and the attachment of basal keratinocytes to the underlying basement membrane. In terms of biological role, the 120 kDa linear IgA disease antigen homolog is an anchoring filament component involved in dermal-epidermal cohesion. The protein is Collagen alpha-1(XVII) chain (Col17a1) of Mus musculus (Mouse).